The chain runs to 227 residues: Cytochrome c oxidase subunit 2 (227 aa).

Topologically, residues 1 to 14 (MAYPFELGFQDATS) are mitochondrial intermembrane. A helical membrane pass occupies residues 15-45 (PIMEELLHFHDHTLMIVFLISSLVLYIISLM). Over 46-59 (LTTKLTHTSTMDAQ) the chain is Mitochondrial matrix. Residues 60 to 87 (EVETIWTILPAIILILIALPSLRILYMM) form a helical membrane-spanning segment. Residues 88–227 (DEINDPSLTV…HFENWSSSML (140 aa)) lie on the Mitochondrial intermembrane side of the membrane. Positions 161, 196, 198, 200, 204, and 207 each coordinate Cu cation. Glu-198 serves as a coordination point for Mg(2+).

It belongs to the cytochrome c oxidase subunit 2 family. As to quaternary structure, component of the cytochrome c oxidase (complex IV, CIV), a multisubunit enzyme composed of 14 subunits. The complex is composed of a catalytic core of 3 subunits MT-CO1, MT-CO2 and MT-CO3, encoded in the mitochondrial DNA, and 11 supernumerary subunits COX4I, COX5A, COX5B, COX6A, COX6B, COX6C, COX7A, COX7B, COX7C, COX8 and NDUFA4, which are encoded in the nuclear genome. The complex exists as a monomer or a dimer and forms supercomplexes (SCs) in the inner mitochondrial membrane with NADH-ubiquinone oxidoreductase (complex I, CI) and ubiquinol-cytochrome c oxidoreductase (cytochrome b-c1 complex, complex III, CIII), resulting in different assemblies (supercomplex SCI(1)III(2)IV(1) and megacomplex MCI(2)III(2)IV(2)). Found in a complex with TMEM177, COA6, COX18, COX20, SCO1 and SCO2. Interacts with TMEM177 in a COX20-dependent manner. Interacts with COX20. Interacts with COX16. Cu cation serves as cofactor.

It localises to the mitochondrion inner membrane. It carries out the reaction 4 Fe(II)-[cytochrome c] + O2 + 8 H(+)(in) = 4 Fe(III)-[cytochrome c] + 2 H2O + 4 H(+)(out). In terms of biological role, component of the cytochrome c oxidase, the last enzyme in the mitochondrial electron transport chain which drives oxidative phosphorylation. The respiratory chain contains 3 multisubunit complexes succinate dehydrogenase (complex II, CII), ubiquinol-cytochrome c oxidoreductase (cytochrome b-c1 complex, complex III, CIII) and cytochrome c oxidase (complex IV, CIV), that cooperate to transfer electrons derived from NADH and succinate to molecular oxygen, creating an electrochemical gradient over the inner membrane that drives transmembrane transport and the ATP synthase. Cytochrome c oxidase is the component of the respiratory chain that catalyzes the reduction of oxygen to water. Electrons originating from reduced cytochrome c in the intermembrane space (IMS) are transferred via the dinuclear copper A center (CU(A)) of subunit 2 and heme A of subunit 1 to the active site in subunit 1, a binuclear center (BNC) formed by heme A3 and copper B (CU(B)). The BNC reduces molecular oxygen to 2 water molecules using 4 electrons from cytochrome c in the IMS and 4 protons from the mitochondrial matrix. This is Cytochrome c oxidase subunit 2 (MT-CO2) from Tamias amoenus (Yellow-pine chipmunk).